We begin with the raw amino-acid sequence, 114 residues long: UPF0060 membrane protein GDI3492/Gdia_2889 (114 aa).

Helical transmembrane passes span 8–28, 35–55, 64–84, and 92–112; these read FAVY…WWCW, AWVL…LTLV, FAAY…LVEG, and AAGV…GRGA.

The protein belongs to the UPF0060 family.

The protein localises to the cell inner membrane. This chain is UPF0060 membrane protein GDI3492/Gdia_2889, found in Gluconacetobacter diazotrophicus (strain ATCC 49037 / DSM 5601 / CCUG 37298 / CIP 103539 / LMG 7603 / PAl5).